The primary structure comprises 233 residues: Large ribosomal subunit protein uL1 (233 aa).

This sequence belongs to the universal ribosomal protein uL1 family. As to quaternary structure, part of the 50S ribosomal subunit.

Functionally, binds directly to 23S rRNA. The L1 stalk is quite mobile in the ribosome, and is involved in E site tRNA release. Its function is as follows. Protein L1 is also a translational repressor protein, it controls the translation of the L11 operon by binding to its mRNA. The sequence is that of Large ribosomal subunit protein uL1 from Pseudoalteromonas atlantica (strain T6c / ATCC BAA-1087).